Here is a 379-residue protein sequence, read N- to C-terminus: Ascochitine biosynthesis cluster protein 8 (379 aa).

Helical transmembrane passes span 87-107, 116-136, and 141-161; these read ELIASVLALVARFGALVLDLE, VGPVSILGFCTGLLAGAVAAC, and IKVFDLACEVLAISFRLVVAL.

It is found in the membrane. The protein operates within mycotoxin biosynthesis. Part of the gene cluster that mediates the biosynthesis of the selective antifungal agent ascochitine, an o-quinone methide that plays a possible protective role against other microbial competitors in nature and is considered to be important for pathogenicity of legume-associated Didymella species. The pathway probably begins with the synthesis of a keto-aldehyde intermediate by the ascochitine non-reducing polyketide synthase pksAC from successive condensations of 4 malonyl-CoA units, presumably with a simple acetyl-CoA starter unit. Release of the keto-aldehyde intermediate is consistent with the presence of the C-terminal reductive release domain. The HR-PKS (orf7) probably makes a diketide starter unit which is passed to the non-reducing polyketide synthase pksAC for further extension, producing ascochital and ascochitine. The aldehyde dehydrogenase (orf1), the 2-oxoglutarate-dependent dioxygenase (orf3) and the dehydrogenase (orf9) are probably involved in subsequent oxidations of methyl groups to the carboxylic acid of the heterocyclic ring. The ascochitine gene cluster also includes a gene encoding a short peptide with a cupin domain (orf2) that is often found in secondary metabolite gene clusters and which function has still to be determined. The protein is Ascochitine biosynthesis cluster protein 8 of Didymella fabae (Leaf and pod spot disease fungus).